The chain runs to 94 residues: Aspartyl/glutamyl-tRNA(Asn/Gln) amidotransferase subunit C (94 aa).

It belongs to the GatC family. As to quaternary structure, heterotrimer of A, B and C subunits.

It catalyses the reaction L-glutamyl-tRNA(Gln) + L-glutamine + ATP + H2O = L-glutaminyl-tRNA(Gln) + L-glutamate + ADP + phosphate + H(+). It carries out the reaction L-aspartyl-tRNA(Asn) + L-glutamine + ATP + H2O = L-asparaginyl-tRNA(Asn) + L-glutamate + ADP + phosphate + 2 H(+). In terms of biological role, allows the formation of correctly charged Asn-tRNA(Asn) or Gln-tRNA(Gln) through the transamidation of misacylated Asp-tRNA(Asn) or Glu-tRNA(Gln) in organisms which lack either or both of asparaginyl-tRNA or glutaminyl-tRNA synthetases. The reaction takes place in the presence of glutamine and ATP through an activated phospho-Asp-tRNA(Asn) or phospho-Glu-tRNA(Gln). The sequence is that of Aspartyl/glutamyl-tRNA(Asn/Gln) amidotransferase subunit C from Desulfotalea psychrophila (strain LSv54 / DSM 12343).